The chain runs to 257 residues: NAD-capped RNA hydrolase NudC (257 aa).

Arg69 is a substrate binding site. Zn(2+)-binding residues include Cys98 and Cys101. Glu111 contacts substrate. Residues Cys116 and Cys119 each contribute to the Zn(2+) site. Tyr124 lines the substrate pocket. The 124-residue stretch at 125–248 (PQIAPCIIVA…TVARRLIEDT (124 aa)) folds into the Nudix hydrolase domain. Positions 158, 174, and 178 each coordinate a divalent metal cation. A Nudix box motif is present at residues 159 to 180 (GFVEVGETLEQAVAREVMEESG). 192-199 (QPWPFPQS) is a substrate binding site. Glu219 is an a divalent metal cation binding site. Ala241 contributes to the substrate binding site.

It belongs to the Nudix hydrolase family. NudC subfamily. In terms of assembly, homodimer. Requires Mg(2+) as cofactor. Mn(2+) serves as cofactor. Zn(2+) is required as a cofactor.

It carries out the reaction a 5'-end NAD(+)-phospho-ribonucleoside in mRNA + H2O = a 5'-end phospho-adenosine-phospho-ribonucleoside in mRNA + beta-nicotinamide D-ribonucleotide + 2 H(+). It catalyses the reaction NAD(+) + H2O = beta-nicotinamide D-ribonucleotide + AMP + 2 H(+). The catalysed reaction is NADH + H2O = reduced beta-nicotinamide D-ribonucleotide + AMP + 2 H(+). Functionally, mRNA decapping enzyme that specifically removes the nicotinamide adenine dinucleotide (NAD) cap from a subset of mRNAs by hydrolyzing the diphosphate linkage to produce nicotinamide mononucleotide (NMN) and 5' monophosphate mRNA. The NAD-cap is present at the 5'-end of some mRNAs and stabilizes RNA against 5'-processing. Has preference for mRNAs with a 5'-end purine. Catalyzes the hydrolysis of a broad range of dinucleotide pyrophosphates. This is NAD-capped RNA hydrolase NudC from Salmonella dublin (strain CT_02021853).